The primary structure comprises 513 residues: Flavonoid 3',5'-hydroxylase (513 aa).

Cys-446 serves as a coordination point for heme.

This sequence belongs to the cytochrome P450 family. Heme is required as a cofactor. In terms of tissue distribution, hypocotyl tissues.

It catalyses the reaction a 3',5'-unsubstituted flavanone + 2 reduced [NADPH--hemoprotein reductase] + 2 O2 = a 3',5'-dihydroxyflavanone + 2 oxidized [NADPH--hemoprotein reductase] + 2 H2O + 2 H(+). The protein operates within pigment biosynthesis; anthocyanin biosynthesis. Functionally, catalyzes the 3'5'-hydroxylation of naringenin and eriodictyol to form 5,7,3,'4',5'-pentahydroxyflavanone and 3',5'-hydroxylation of dihydrokaempferol and dihydroquercetin to form dihydromyricetin. The polypeptide is Flavonoid 3',5'-hydroxylase (CYP75A2) (Solanum melongena (Eggplant)).